The primary structure comprises 307 residues: Oligopeptide transport ATP-binding protein OppF (307 aa).

An ABC transporter domain is found at 6–251; that stretch reads VEVKDLEISF…PIHPYTQSLL (246 aa). 42 to 49 is a binding site for ATP; that stretch reads GESGSGKT.

This sequence belongs to the ABC transporter superfamily. The complex is composed of two ATP-binding proteins (OppD and OppF), two transmembrane proteins (OppB and OppC) and a solute-binding protein (OppA).

It localises to the cell membrane. The enzyme catalyses a [peptide](out) + ATP + H2O = a [peptide](in) + ADP + phosphate + H(+). Functionally, part of the ABC transporter complex OppABCDF involved in the uptake of oligopeptides. Probably responsible for energy coupling to the transport system. This Streptococcus pyogenes serotype M1 protein is Oligopeptide transport ATP-binding protein OppF (oppF).